A 483-amino-acid polypeptide reads, in one-letter code: FAD-linked oxidoreductase easE (483 aa).

In terms of domain architecture, FAD-binding PCMH-type spans 10-193 (QGRLPFYSAV…TEATVRVFSD (184 aa)).

The protein belongs to the oxygen-dependent FAD-linked oxidoreductase family. Requires FAD as cofactor.

Its pathway is alkaloid biosynthesis; ergot alkaloid biosynthesis. FAD-linked oxidoreductase; part of the gene cluster that mediates the biosynthesis of fungal ergot alkaloid. DmaW catalyzes the first step of ergot alkaloid biosynthesis by condensing dimethylallyl diphosphate (DMAP) and tryptophan to form 4-dimethylallyl-L-tryptophan. The second step is catalyzed by the methyltransferase easF that methylates 4-dimethylallyl-L-tryptophan in the presence of S-adenosyl-L-methionine, resulting in the formation of 4-dimethylallyl-L-abrine. The catalase easC and the FAD-dependent oxidoreductase easE then transform 4-dimethylallyl-L-abrine to chanoclavine-I which is further oxidized by easD in the presence of NAD(+), resulting in the formation of chanoclavine-I aldehyde. Agroclavine dehydrogenase easG then mediates the conversion of chanoclavine-I aldehyde to agroclavine via a non-enzymatic adduct reaction: the substrate is an iminium intermediate that is formed spontaneously from chanoclavine-I aldehyde in the presence of glutathione. The presence of easA is not required to complete this reaction. Further conversion of agroclavine to paspalic acid is a two-step process involving oxidation of agroclavine to elymoclavine and of elymoclavine to paspalic acid, the second step being performed by the elymoclavine oxidase cloA. Paspalic acid is then further converted to D-lysergic acid. Ergopeptines are assembled from D-lysergic acid and three different amino acids by the D-lysergyl-peptide-synthetases composed each of a monomudular and a trimodular nonribosomal peptide synthetase subunit. LpsB and lpsC encode the monomodular subunits responsible for D-lysergic acid activation and incorporation into the ergopeptine backbone. LpsA1 and A2 subunits encode the trimodular nonribosomal peptide synthetase assembling the tripeptide portion of ergopeptines. LpsA1 is responsible for formation of the major ergopeptine, ergotamine, and lpsA2 for alpha-ergocryptine, the minor ergopeptine of the total alkaloid mixture elaborated by C.purpurea. D-lysergyl-tripeptides are assembled by the nonribosomal peptide synthetases and released as N-(D-lysergyl-aminoacyl)-lactams. Cyclolization of the D-lysergyl-tripeptides is performed by the Fe(2+)/2-ketoglutarate-dependent dioxygenase easH which introduces a hydroxyl group into N-(D-lysergyl-aminoacyl)-lactam at alpha-C of the aminoacyl residue followed by spontaneous condensation with the terminal lactam carbonyl group. This chain is FAD-linked oxidoreductase easE, found in Claviceps purpurea (strain 20.1) (Ergot fungus).